Here is a 427-residue protein sequence, read N- to C-terminus: Enolase 1 (427 aa).

Gln-162 contacts (2R)-2-phosphoglycerate. Catalysis depends on Glu-204, which acts as the Proton donor. The Mg(2+) site is built by Asp-241, Glu-285, and Asp-312. Residues Lys-337, Arg-366, Ser-367, and Lys-388 each coordinate (2R)-2-phosphoglycerate. The Proton acceptor role is filled by Lys-337.

Belongs to the enolase family. Mg(2+) is required as a cofactor.

Its subcellular location is the cytoplasm. It localises to the secreted. The protein localises to the cell surface. It catalyses the reaction (2R)-2-phosphoglycerate = phosphoenolpyruvate + H2O. It functions in the pathway carbohydrate degradation; glycolysis; pyruvate from D-glyceraldehyde 3-phosphate: step 4/5. Its function is as follows. Catalyzes the reversible conversion of 2-phosphoglycerate (2-PG) into phosphoenolpyruvate (PEP). It is essential for the degradation of carbohydrates via glycolysis. The chain is Enolase 1 from Chlorobaculum tepidum (strain ATCC 49652 / DSM 12025 / NBRC 103806 / TLS) (Chlorobium tepidum).